The sequence spans 356 residues: OVARIAN TUMOR DOMAIN-containing deubiquitinating enzyme 10 (356 aa).

The disordered stretch occupies residues Asp-86 to Gln-117. Residues His-89 to Asn-115 are compositionally biased toward low complexity. In terms of domain architecture, OTU spans Phe-213–Asn-337. Asp-221 is a catalytic residue. Cys-224 acts as the Nucleophile in catalysis. His-330 is a catalytic residue.

This sequence belongs to the peptidase C85 family.

The catalysed reaction is Thiol-dependent hydrolysis of ester, thioester, amide, peptide and isopeptide bonds formed by the C-terminal Gly of ubiquitin (a 76-residue protein attached to proteins as an intracellular targeting signal).. Functionally, hydrolase that can remove conjugated ubiquitin from proteins in vitro and may therefore play an important regulatory role at the level of protein turnover by preventing degradation. Cysteine protease with a preference for 'Lys-63' over 'Lys-48' over 'Met-1' -linked ubiquitin (UB) tetramers as substrates. Also cleaves RUB-GST fusion. In Arabidopsis thaliana (Mouse-ear cress), this protein is OVARIAN TUMOR DOMAIN-containing deubiquitinating enzyme 10.